A 400-amino-acid chain; its full sequence is Subtilisin-like protease 7 (400 aa).

The first 20 residues, 1 to 20, serve as a signal peptide directing secretion; it reads MGFITKAIPLALAAMSVVNG. Residues 21–119 constitute a propeptide that is removed on maturation; the sequence is AEILETRAGV…IERDARVQIN (99 aa). The 83-residue stretch at 36-118 folds into the Inhibitor I9 domain; sequence KYIVIMNDGV…YIERDARVQI (83 aa). Residues 129–400 form the Peptidase S8 domain; sequence SWGLARVGSR…GKLINNGSGK (272 aa). Active-site charge relay system residues include Asp161 and His192. Asn222 and Asn252 each carry an N-linked (GlcNAc...) asparagine glycan. Catalysis depends on Ser346, which acts as the Charge relay system. N-linked (GlcNAc...) asparagine glycosylation is present at Asn396.

The protein belongs to the peptidase S8 family.

The protein localises to the secreted. Its function is as follows. Secreted subtilisin-like serine protease with keratinolytic activity that contributes to pathogenicity. The protein is Subtilisin-like protease 7 (SUB7) of Arthroderma otae (strain ATCC MYA-4605 / CBS 113480) (Microsporum canis).